The primary structure comprises 132 residues: uncharacterized protein (132 aa).

3 helical membrane passes run 18 to 38 (MLFI…FIGI), 50 to 70 (IIYF…GVFI), and 71 to 91 (VVPL…LYLI).

The protein resides in the cell membrane. This is an uncharacterized protein from Bacillus subtilis (strain 168).